A 481-amino-acid polypeptide reads, in one-letter code: Tripartite motif-containing protein 10 (481 aa).

The segment at 16 to 61 adopts an RING-type zinc-finger fold; that stretch reads CPICQGTLREPVTIDCGHNFCRACLTRYCEIPGPDLEESPTCPLCK. The B box-type zinc-finger motif lies at 94-135; it reads GEEDVCQEHGEKIYFFCEDDEMQLCVVCREAGEHATHTMRFL. 4 residues coordinate Zn(2+): cysteine 99, histidine 102, cysteine 121, and histidine 127. The stretch at 142-177 forms a coiled coil; that stretch reads YREQIHKCLKRLRKEREETQEIQSRENKRMQVLLTQ. The B30.2/SPRY domain maps to 292 to 481; that stretch reads REMKMFLEKL…GRGSSFFLSS (190 aa).

It belongs to the TRIM/RBCC family. In terms of assembly, interacts with IFNAR1; this interaction prevents association of IFNAR1 with TYK2.

The protein resides in the cytoplasm. Its function is as follows. E3 ligase that plays an essential role in the differentiation and survival of terminal erythroid cells. May directly bind to PTEN and promote its ubiquitination, resulting in its proteasomal degradation and activation of hypertrophic signaling. In addition, plays a role in immune response regulation by repressing the phosphorylation of STAT1 and STAT2 in the interferon/JAK/STAT signaling pathway independent of its E3 ligase activity. Mechanistically, interacts with the intracellular domain of IFNAR1 and thereby inhibits the association of TYK2 and IFNAR1. This Pan troglodytes (Chimpanzee) protein is Tripartite motif-containing protein 10 (TRIM10).